The primary structure comprises 764 residues: Metabotropic glutamate receptor-like protein H (764 aa).

The signal sequence occupies residues 1–20 (MKNILKILILILICINKINC). The Extracellular segment spans residues 21-393 (LDGDGKQFRM…EVEFSQSIQN (373 aa)). N-linked (GlcNAc...) asparagine glycans are attached at residues N72, N260, N278, N344, and N379. Residues 394–414 (GFSITTGILIGITILMMIGII) traverse the membrane as a helical segment. The Cytoplasmic segment spans residues 415-427 (KYSKTPSMRSASP). Residues 428-448 (IFLNFILAGGIIVYIGIIVWV) form a helical membrane-spanning segment. Topologically, residues 449–464 (GPMSTHSCNARLWLVT) are extracellular. A helical membrane pass occupies residues 465-485 (LGFSTLIGSLVVKNFRIWLIF). Residues 486–500 (DNPELKSIKITNYQL) lie on the Cytoplasmic side of the membrane. Residues 501–521 (FPWVGACLVINIILMAILTSV) form a helical membrane-spanning segment. Topologically, residues 522–552 (GDLKQIDAMNIDSLGKYEYMKVCKMNSSGAS) are extracellular. N547 carries N-linked (GlcNAc...) asparagine glycosylation. Residues 553 to 573 (TLYTILAYFAALLLVGVFVSW) form a helical membrane-spanning segment. Topologically, residues 574 to 587 (KIRIVDILEFNESG) are cytoplasmic. Residues 588-608 (AIANTLYAISFCLFVIVPLMI) form a helical membrane-spanning segment. Residues 609 to 617 (SPQDMQSET) are Extracellular-facing. The helical transmembrane segment at 618 to 638 (IILCTTGLFITTAALLIIFIP) threads the bilayer. Over 639–764 (KFWRVFRKGA…IIVNDSENNN (126 aa)) the chain is Cytoplasmic. The disordered stretch occupies residues 664–764 (ATARAESGSK…IIVNDSENNN (101 aa)). Positions 671-690 (GSKGSNGNASSGNRTNRRGN) are enriched in low complexity. Positions 707–719 (ENQKEKEKIKDDV) are enriched in basic and acidic residues. Residues 731–748 (FTDEASDTDNNEFNDIEL) show a composition bias toward acidic residues.

In the N-terminal section; belongs to the BMP lipoprotein family. It in the C-terminal section; belongs to the G-protein coupled receptor 3 family. GABA-B receptor subfamily.

The protein resides in the membrane. The polypeptide is Metabotropic glutamate receptor-like protein H (grlH) (Dictyostelium discoideum (Social amoeba)).